The following is a 383-amino-acid chain: Retrovirus-related Pol polyprotein from type-1 retrotransposable element R1 3 (383 aa).

The 88-residue stretch at 1–88 (VDAFADDLLL…DRVRYLGVNV (88 aa)) folds into the Reverse transcriptase domain. The nucleic acid-binding endonuclease stretch occupies residues 229 to 383 (LSLHECRELV…VQRMRENEES (155 aa)).

It catalyses the reaction DNA(n) + a 2'-deoxyribonucleoside 5'-triphosphate = DNA(n+1) + diphosphate. The protein is Retrovirus-related Pol polyprotein from type-1 retrotransposable element R1 3 of Nasonia vitripennis (Parasitic wasp).